The following is a 1164-amino-acid chain: DNA-directed RNA polymerase 133 kDa polypeptide (1164 aa).

Belongs to the RNA polymerase beta chain family. The DNA-dependent RNA polymerase used for intermediate and late genes expression consists of eight subunits 147 kDa, 133 kDa, 35 kDa, 30 kDa, 22 kDa, 19 kDa, 18 kDa and 7 kDa totalling more than 500 kDa in mass. The same holoenzyme, with the addition of the transcription-specificity factor RAP94, is used for early gene expression.

It localises to the virion. The catalysed reaction is RNA(n) + a ribonucleoside 5'-triphosphate = RNA(n+1) + diphosphate. Part of the DNA-dependent RNA polymerase which catalyzes the transcription of viral DNA into RNA using the four ribonucleoside triphosphates as substrates. Responsible for the transcription of early, intermediate and late genes. DNA-dependent RNA polymerase associates with the early transcription factor (ETF), itself composed of OPG118 and OPG133, thereby allowing the early genes transcription. Late transcription, and probably also intermediate transcription, require newly synthesized RNA polymerase. This Homo sapiens (Human) protein is DNA-directed RNA polymerase 133 kDa polypeptide (OPG151).